A 164-amino-acid chain; its full sequence is uncharacterized protein (164 aa).

Residues 1–17 (MNSRVPATQSWFSSHLP) are compositionally biased toward polar residues. The tract at residues 1-48 (MNSRVPATQSWFSSHLPTTEPDLEPATAAEGSTTETATLSPETTSFND) is disordered. Low complexity predominate over residues 24-45 (EPATAAEGSTTETATLSPETTS). A helical membrane pass occupies residues 64-84 (MLLSFGIITVIGLAVAMVLYI). Residues 106 to 130 (TEEQDELEQELLEHGRDAASMQAAA) adopt a coiled-coil conformation.

The protein resides in the membrane. This is an uncharacterized protein from Mus musculus (Mouse).